A 118-amino-acid chain; its full sequence is SPbeta prophage-derived uncharacterized protein YolB (118 aa).

The chain is SPbeta prophage-derived uncharacterized protein YolB (yolB) from Bacillus subtilis (strain 168).